We begin with the raw amino-acid sequence, 420 residues long: Mannose-1-phosphate guanylyltransferase regulatory subunit alpha (420 aa).

Residues 2 to 251 are substrate-binding domain; that stretch reads LKAVILIGGP…DGIWSQIKSA (250 aa). Residues Glu-85 and Gln-247 each contribute to the GDP-alpha-D-mannose site. A hexapeptide repeat domain region spans residues 273 to 420; it reads LAKHTPGGPW…SRSFTNQIIL (148 aa). The C-loop stretch occupies residues 356–384; the sequence is TPSDPNPNDPRARMDSESLFKDGKLLPAI.

Belongs to the transferase hexapeptide repeat family. As to quaternary structure, component of the GMPPA-GMPPB mannose-1-phosphate guanylyltransferase complex composed of 4 GMPPA subunits and 8 GMPPB subunits; the complex is organized into three layers, a central layer made up of 2 GMPPA dimers sandwiched between two layers each made up of 2 GMPPB dimers. As to expression, expressed in fibroblasts (at protein level).

It is found in the cytoplasm. Functionally, regulatory subunit of the GMPPA-GMPPB mannose-1-phosphate guanylyltransferase complex; reduces the catalytic activity of GMPPB when part of the complex. Mediates allosteric feedback inhibition of GMPPB catalytic activity upon binding GDP-alpha-D-mannose. Together with GMPPB regulates GDP-alpha-D-mannose levels. This Homo sapiens (Human) protein is Mannose-1-phosphate guanylyltransferase regulatory subunit alpha.